The primary structure comprises 163 residues: NADH-quinone oxidoreductase subunit I (163 aa).

4Fe-4S ferredoxin-type domains lie at 53–83 and 94–123; these read LRRYPNGEERCIACKLCEAICPAQAITIEAG and VRYDIDMVKCIYCGFCQEACPVEAIVEGPN. Positions 63, 66, 69, 73, 103, 106, 109, and 113 each coordinate [4Fe-4S] cluster.

It belongs to the complex I 23 kDa subunit family. As to quaternary structure, NDH-1 is composed of 14 different subunits. Subunits NuoA, H, J, K, L, M, N constitute the membrane sector of the complex. Requires [4Fe-4S] cluster as cofactor.

The protein localises to the cell inner membrane. The catalysed reaction is a quinone + NADH + 5 H(+)(in) = a quinol + NAD(+) + 4 H(+)(out). In terms of biological role, NDH-1 shuttles electrons from NADH, via FMN and iron-sulfur (Fe-S) centers, to quinones in the respiratory chain. The immediate electron acceptor for the enzyme in this species is believed to be ubiquinone. Couples the redox reaction to proton translocation (for every two electrons transferred, four hydrogen ions are translocated across the cytoplasmic membrane), and thus conserves the redox energy in a proton gradient. The sequence is that of NADH-quinone oxidoreductase subunit I from Bartonella henselae (strain ATCC 49882 / DSM 28221 / CCUG 30454 / Houston 1) (Rochalimaea henselae).